Consider the following 563-residue polypeptide: Arginine--tRNA ligase (563 aa).

The short motif at A134–N144 is the 'HIGH' region element.

Belongs to the class-I aminoacyl-tRNA synthetase family. As to quaternary structure, monomer.

It localises to the cytoplasm. It carries out the reaction tRNA(Arg) + L-arginine + ATP = L-arginyl-tRNA(Arg) + AMP + diphosphate. The protein is Arginine--tRNA ligase of Heliobacterium modesticaldum (strain ATCC 51547 / Ice1).